A 656-amino-acid polypeptide reads, in one-letter code: MINPSTKVSTKVLDKKYNFKIEYKLIKNKDLLKSRLSEIPKSSGCYLFKDIDNNLLYIGKSKTLRNRVSSYFNNYAELSPRLSLMVRQITEIEIIVTDSEYEALNLESNLIKTNKPYFNILLKDDKKYPYLCITWSEQYPRIFITRKRRNRNNFDRYYGPYVDVGLLRKTLFIIKKIFPLRQRPRPVYKDRTCLNYSIGRCPGVCQEIISSEDYKKTMKQVSMIFQGRNDDLEVFLERKMNQYSNDLEFENAAKIRDQISGLKLLTESQKISIPDSSINRDIFGIVSENNISSIQIFQMRSGKLIGRIGYTQKIDNSDETEILQRVLEEHYINVEGVEIPSEILLQFNLPKHNTIEEWLSELRQKKVKLIIPKRNKKFETVEMVLKNAKLELERILNGIQDNESSIEDLTQILELTNQPRRIEGYDISHIQGTDPVASQVVFIDGIPSKQNYRKYKIKDPNIFIGHSDDFASIYEVIYRRFKKWSKFKIDGGDISSLQDKKKSTLENDLLTDWPDLIMIDGGKGQLNAALKALTQLDLHEEVNICSLAKKNEEIFIPGFSKSLDTDQNQKGLLLLRRVRDEAHRFALSFHRNKRSARMNRSQLSQIPGLGPSRIKDLLEHFNSIDAIRIASREELSKVKGLGMHSANDIYNYFNEL.

Residues 41–120 (KSSGCYLFKD…IKTNKPYFNI (80 aa)) form the GIY-YIG domain. One can recognise a UVR domain in the interval 230-265 (DDLEVFLERKMNQYSNDLEFENAAKIRDQISGLKLL).

It belongs to the UvrC family. In terms of assembly, interacts with UvrB in an incision complex.

It localises to the cytoplasm. The UvrABC repair system catalyzes the recognition and processing of DNA lesions. UvrC both incises the 5' and 3' sides of the lesion. The N-terminal half is responsible for the 3' incision and the C-terminal half is responsible for the 5' incision. In Prochlorococcus marinus subsp. pastoris (strain CCMP1986 / NIES-2087 / MED4), this protein is UvrABC system protein C.